A 283-amino-acid chain; its full sequence is MNTLKFTKMHGLGNDFMVIDAVSQDFTPEDAPIAAWADRFRGVGFDQLLVVGRSETEGVDFRYRIFNADGSEVGQCGNGARCFARFVADKGLTDKKEICVETANGVIFPKLSDNGMVTVNMGKPRFMPSEIPFVPESGEGDDACIYGVHLESGIQPVSCVNMGNPHAVIVVDDVECAQVRETGSLIEPHRQFPERVNVGFMQIVSRTAIRLRVFERGVGETQACGTGACAAVVAGIRLGLLDEGKTVEVILPGGTLYIEWACGGDVMMTGPAETVFEGELAYS.

Residues asparagine 14, glutamine 47, and asparagine 67 each contribute to the substrate site. Cysteine 76 acts as the Proton donor in catalysis. Residues 77–78, asparagine 164, asparagine 197, and 215–216 each bind substrate; these read GN and ER. Cysteine 224 functions as the Proton acceptor in the catalytic mechanism. 225 to 226 is a binding site for substrate; it reads GT.

The protein belongs to the diaminopimelate epimerase family. As to quaternary structure, homodimer.

It localises to the cytoplasm. The enzyme catalyses (2S,6S)-2,6-diaminopimelate = meso-2,6-diaminopimelate. The protein operates within amino-acid biosynthesis; L-lysine biosynthesis via DAP pathway; DL-2,6-diaminopimelate from LL-2,6-diaminopimelate: step 1/1. Functionally, catalyzes the stereoinversion of LL-2,6-diaminopimelate (L,L-DAP) to meso-diaminopimelate (meso-DAP), a precursor of L-lysine and an essential component of the bacterial peptidoglycan. This Neisseria meningitidis serogroup A / serotype 4A (strain DSM 15465 / Z2491) protein is Diaminopimelate epimerase.